Consider the following 275-residue polypeptide: Type III pantothenate kinase (275 aa).

6–13 (DAGNTNIV) contacts ATP. 108–111 (GADR) serves as a coordination point for substrate. Residue D110 is the Proton acceptor of the active site. D130 is a binding site for K(+). T133 provides a ligand contact to ATP. T187 contacts substrate.

Belongs to the type III pantothenate kinase family. Homodimer. The cofactor is NH4(+). It depends on K(+) as a cofactor.

The protein localises to the cytoplasm. The enzyme catalyses (R)-pantothenate + ATP = (R)-4'-phosphopantothenate + ADP + H(+). It participates in cofactor biosynthesis; coenzyme A biosynthesis; CoA from (R)-pantothenate: step 1/5. Functionally, catalyzes the phosphorylation of pantothenate (Pan), the first step in CoA biosynthesis. The protein is Type III pantothenate kinase of Zymomonas mobilis subsp. mobilis (strain ATCC 31821 / ZM4 / CP4).